A 193-amino-acid chain; its full sequence is dTTP/UTP pyrophosphatase (193 aa).

The Proton acceptor role is filled by Asp-77.

It belongs to the Maf family. YhdE subfamily. The cofactor is a divalent metal cation.

The protein localises to the cytoplasm. The catalysed reaction is dTTP + H2O = dTMP + diphosphate + H(+). It catalyses the reaction UTP + H2O = UMP + diphosphate + H(+). Nucleoside triphosphate pyrophosphatase that hydrolyzes dTTP and UTP. May have a dual role in cell division arrest and in preventing the incorporation of modified nucleotides into cellular nucleic acids. In Bacteroides thetaiotaomicron (strain ATCC 29148 / DSM 2079 / JCM 5827 / CCUG 10774 / NCTC 10582 / VPI-5482 / E50), this protein is dTTP/UTP pyrophosphatase.